The primary structure comprises 272 residues: uncharacterized protein (272 aa).

An N-terminal signal peptide occupies residues 1-22 (MEYIKKIALYMSVLLLIIFIGG). Cysteine 23 is lipidated: N-palmitoyl cysteine. Cysteine 23 is lipidated: S-diacylglycerol cysteine.

Belongs to the staphylococcal tandem lipoprotein family.

Its subcellular location is the cell membrane. This is an uncharacterized protein from Staphylococcus aureus (strain MRSA252).